A 201-amino-acid chain; its full sequence is Acireductone dioxygenase 2 (201 aa).

Fe(2+) contacts are provided by His-83, His-85, Glu-89, and His-129. 4 residues coordinate Ni(2+): His-83, His-85, Glu-89, and His-129.

It belongs to the acireductone dioxygenase (ARD) family. Fe(2+) serves as cofactor. It depends on Ni(2+) as a cofactor.

It is found in the cytoplasm. Its subcellular location is the nucleus. The enzyme catalyses 1,2-dihydroxy-5-(methylsulfanyl)pent-1-en-3-one + O2 = 4-methylsulfanyl-2-oxobutanoate + formate + 2 H(+). The catalysed reaction is 1,2-dihydroxy-5-(methylsulfanyl)pent-1-en-3-one + O2 = 3-(methylsulfanyl)propanoate + CO + formate + 2 H(+). The protein operates within amino-acid biosynthesis; L-methionine biosynthesis via salvage pathway; L-methionine from S-methyl-5-thio-alpha-D-ribose 1-phosphate: step 5/6. Catalyzes 2 different reactions between oxygen and the acireductone 1,2-dihydroxy-3-keto-5-methylthiopentene (DHK-MTPene) depending upon the metal bound in the active site. Fe-containing acireductone dioxygenase (Fe-ARD) produces formate and 2-keto-4-methylthiobutyrate (KMTB), the alpha-ketoacid precursor of methionine in the methionine recycle pathway. Ni-containing acireductone dioxygenase (Ni-ARD) produces methylthiopropionate, carbon monoxide and formate, and does not lie on the methionine recycle pathway. In Coprinopsis cinerea (strain Okayama-7 / 130 / ATCC MYA-4618 / FGSC 9003) (Inky cap fungus), this protein is Acireductone dioxygenase 2.